Here is a 525-residue protein sequence, read N- to C-terminus: GMP synthase [glutamine-hydrolyzing] (525 aa).

A Glutamine amidotransferase type-1 domain is found at 8–207 (KILILDFGSQ…ALDICECEAN (200 aa)). Cysteine 85 (nucleophile) is an active-site residue. Residues histidine 181 and glutamate 183 contribute to the active site. In terms of domain architecture, GMPS ATP-PPase spans 208 to 400 (WKPTSIIEDA…LGLPYDMLYR (193 aa)). Residue 235-241 (SGGVDSS) participates in ATP binding.

Homodimer.

It catalyses the reaction XMP + L-glutamine + ATP + H2O = GMP + L-glutamate + AMP + diphosphate + 2 H(+). The protein operates within purine metabolism; GMP biosynthesis; GMP from XMP (L-Gln route): step 1/1. In terms of biological role, catalyzes the synthesis of GMP from XMP. In Shewanella sediminis (strain HAW-EB3), this protein is GMP synthase [glutamine-hydrolyzing].